The primary structure comprises 455 residues: Probable glycine dehydrogenase (decarboxylating) subunit 1 (455 aa).

The protein belongs to the GcvP family. N-terminal subunit subfamily. As to quaternary structure, the glycine cleavage system is composed of four proteins: P, T, L and H. In this organism, the P 'protein' is a heterodimer of two subunits.

It catalyses the reaction N(6)-[(R)-lipoyl]-L-lysyl-[glycine-cleavage complex H protein] + glycine + H(+) = N(6)-[(R)-S(8)-aminomethyldihydrolipoyl]-L-lysyl-[glycine-cleavage complex H protein] + CO2. In terms of biological role, the glycine cleavage system catalyzes the degradation of glycine. The P protein binds the alpha-amino group of glycine through its pyridoxal phosphate cofactor; CO(2) is released and the remaining methylamine moiety is then transferred to the lipoamide cofactor of the H protein. The protein is Probable glycine dehydrogenase (decarboxylating) subunit 1 of Saccharolobus islandicus (strain Y.N.15.51 / Yellowstone #2) (Sulfolobus islandicus).